A 154-amino-acid chain; its full sequence is Large ribosomal subunit protein uL13 (154 aa).

Belongs to the universal ribosomal protein uL13 family. In terms of assembly, part of the 50S ribosomal subunit.

Functionally, this protein is one of the early assembly proteins of the 50S ribosomal subunit, although it is not seen to bind rRNA by itself. It is important during the early stages of 50S assembly. The polypeptide is Large ribosomal subunit protein uL13 (Brucella abortus (strain S19)).